Here is a 293-residue protein sequence, read N- to C-terminus: Ribosomal protein L11 methyltransferase (293 aa).

4 residues coordinate S-adenosyl-L-methionine: Thr145, Gly166, Asp188, and Asn230.

It belongs to the methyltransferase superfamily. PrmA family.

The protein localises to the cytoplasm. It catalyses the reaction L-lysyl-[protein] + 3 S-adenosyl-L-methionine = N(6),N(6),N(6)-trimethyl-L-lysyl-[protein] + 3 S-adenosyl-L-homocysteine + 3 H(+). Methylates ribosomal protein L11. The chain is Ribosomal protein L11 methyltransferase from Shewanella baltica (strain OS223).